The chain runs to 861 residues: Nuclear pore complex protein NUP93A (861 aa).

Belongs to the nucleoporin interacting component (NIC) family. As to quaternary structure, part of the nuclear pore complex (NPC). The NPC has an eight-fold symmetrical structure comprising a central transport channel and two rings, the cytoplasmic and nuclear rings, to which eight filaments are attached. The cytoplasmic filaments have loose ends, while the nuclear filaments are joined in a distal ring, forming a nuclear basket. NPCs are highly dynamic in configuration and composition, and can be devided in 3 subcomplexes, the NUP62 subcomplex, the NUP107-160 subcomplex and the NUP93 subcomplex, containing approximately 30 different nucleoporin proteins.

It is found in the nucleus envelope. The protein localises to the nucleus. Its subcellular location is the nuclear pore complex. The chain is Nuclear pore complex protein NUP93A from Arabidopsis thaliana (Mouse-ear cress).